The sequence spans 298 residues: Tryptophan 2,3-dioxygenase (298 aa).

Substrate contacts are provided by residues F51–H55, Y113, and R117. H240 is a heme binding site. Position 254 (T254) interacts with substrate.

This sequence belongs to the tryptophan 2,3-dioxygenase family. Homotetramer. The cofactor is heme.

The enzyme catalyses L-tryptophan + O2 = N-formyl-L-kynurenine. Its pathway is amino-acid degradation; L-tryptophan degradation via kynurenine pathway; L-kynurenine from L-tryptophan: step 1/2. In terms of biological role, heme-dependent dioxygenase that catalyzes the oxidative cleavage of the L-tryptophan (L-Trp) pyrrole ring and converts L-tryptophan to N-formyl-L-kynurenine. Catalyzes the oxidative cleavage of the indole moiety. The chain is Tryptophan 2,3-dioxygenase from Xanthomonas euvesicatoria pv. vesicatoria (strain 85-10) (Xanthomonas campestris pv. vesicatoria).